A 102-amino-acid polypeptide reads, in one-letter code: uncharacterized protein (102 aa).

2 helical membrane passes run 24–44 (AFIVPSAIFFFVFYFSLPVLT) and 55–75 (IGAVSWAWLFAIAQFAMTWIL).

Its subcellular location is the cell membrane. This is an uncharacterized protein from Bacillus subtilis (strain 168).